A 198-amino-acid polypeptide reads, in one-letter code: Nucleoid occlusion factor SlmA (198 aa).

Residues 10–70 (NRREEILQSL…SLIEFIEDSL (61 aa)) enclose the HTH tetR-type domain. The segment at residues 33 to 52 (TTAKLAASVGVSEAALYRHF) is a DNA-binding region (H-T-H motif). Residues 117-145 (EQDRLQGRINQLFERIEAQLRQVMREKKM) are a coiled coil.

The protein belongs to the nucleoid occlusion factor SlmA family. Homodimer. Interacts with FtsZ.

The protein resides in the cytoplasm. Its subcellular location is the nucleoid. Required for nucleoid occlusion (NO) phenomenon, which prevents Z-ring formation and cell division over the nucleoid. Acts as a DNA-associated cell division inhibitor that binds simultaneously chromosomal DNA and FtsZ, and disrupts the assembly of FtsZ polymers. SlmA-DNA-binding sequences (SBS) are dispersed on non-Ter regions of the chromosome, preventing FtsZ polymerization at these regions. This is Nucleoid occlusion factor SlmA from Klebsiella pneumoniae subsp. pneumoniae (strain ATCC 700721 / MGH 78578).